A 279-amino-acid chain; its full sequence is Formamidopyrimidine-DNA glycosylase (279 aa).

Catalysis depends on Pro-2, which acts as the Schiff-base intermediate with DNA. The active-site Proton donor is the Glu-3. Lys-58 serves as the catalytic Proton donor; for beta-elimination activity. 3 residues coordinate DNA: His-92, Arg-111, and Arg-153. An FPG-type zinc finger spans residues 238-272 (TVYGKEGQSCLSCSSTIIKTKHSGRSTFYCKTCQY). The active-site Proton donor; for delta-elimination activity is Arg-262.

This sequence belongs to the FPG family. Monomer. Zn(2+) is required as a cofactor.

It catalyses the reaction Hydrolysis of DNA containing ring-opened 7-methylguanine residues, releasing 2,6-diamino-4-hydroxy-5-(N-methyl)formamidopyrimidine.. The enzyme catalyses 2'-deoxyribonucleotide-(2'-deoxyribose 5'-phosphate)-2'-deoxyribonucleotide-DNA = a 3'-end 2'-deoxyribonucleotide-(2,3-dehydro-2,3-deoxyribose 5'-phosphate)-DNA + a 5'-end 5'-phospho-2'-deoxyribonucleoside-DNA + H(+). In terms of biological role, involved in base excision repair of DNA damaged by oxidation or by mutagenic agents. Acts as a DNA glycosylase that recognizes and removes damaged bases. Has a preference for oxidized purines, such as 7,8-dihydro-8-oxoguanine (8-oxoG). Has AP (apurinic/apyrimidinic) lyase activity and introduces nicks in the DNA strand. Cleaves the DNA backbone by beta-delta elimination to generate a single-strand break at the site of the removed base with both 3'- and 5'-phosphates. In Rickettsia massiliae (strain Mtu5), this protein is Formamidopyrimidine-DNA glycosylase.